The primary structure comprises 159 residues: Cyclic pyranopterin monophosphate synthase (159 aa).

Residues 76-78 and 114-115 contribute to the substrate site; these read LCH and ME. Asp-129 is a catalytic residue.

It belongs to the MoaC family. Homohexamer; trimer of dimers.

The catalysed reaction is (8S)-3',8-cyclo-7,8-dihydroguanosine 5'-triphosphate = cyclic pyranopterin phosphate + diphosphate. The protein operates within cofactor biosynthesis; molybdopterin biosynthesis. Catalyzes the conversion of (8S)-3',8-cyclo-7,8-dihydroguanosine 5'-triphosphate to cyclic pyranopterin monophosphate (cPMP). In Clostridium botulinum (strain Alaska E43 / Type E3), this protein is Cyclic pyranopterin monophosphate synthase.